The sequence spans 162 residues: Cyanate hydratase (162 aa).

Residues arginine 90, glutamate 93, and serine 116 contribute to the active site.

It belongs to the cyanase family.

It carries out the reaction cyanate + hydrogencarbonate + 3 H(+) = NH4(+) + 2 CO2. Its function is as follows. Catalyzes the reaction of cyanate with bicarbonate to produce ammonia and carbon dioxide. This is Cyanate hydratase from Populus trichocarpa (Western balsam poplar).